The chain runs to 378 residues: Putative aminoglycoside phosphotransferase (378 aa).

ATP-binding positions include arginine 79 and 134-136; that span reads DYV. Aspartate 249 acts as the Proton acceptor in catalysis. Mg(2+) is bound by residues asparagine 254, aspartate 267, and glutamate 269.

This sequence belongs to the aminoglycoside phosphotransferase family.

Its function is as follows. Might catalyze the phosphorylation of aminoglycosides and confer aminoglycoside antibiotics resistance. This chain is Putative aminoglycoside phosphotransferase, found in Mycobacterium tuberculosis (strain CDC 1551 / Oshkosh).